Consider the following 401-residue polypeptide: Short chain dehydrogenase/reductase dpchH (401 aa).

The N-linked (GlcNAc...) asparagine glycan is linked to asparagine 16. A helical transmembrane segment spans residues valine 51 to leucine 71. NAD(+) contacts are provided by residues lysine 72 to aspartate 80, threonine 99 to glycine 100, and alanine 118 to valine 120. Asparagine 242 carries N-linked (GlcNAc...) asparagine glycosylation. Tyrosine 275 functions as the Proton acceptor in the catalytic mechanism. NAD(+) is bound by residues tyrosine 275–lysine 279 and glycine 308–isoleucine 310. Asparagine 386 carries N-linked (GlcNAc...) asparagine glycosylation.

The protein resides in the membrane. The protein operates within secondary metabolite biosynthesis; terpenoid biosynthesis. Its function is as follows. Short chain dehydrogenase/reductase; part of the gene cluster that mediates the biosynthesis of the diterpenoid pyrones higginsianins A and B. The first step of the pathway is the synthesis of the alpha-pyrone moiety by the polyketide synthase dpchA via condensation of one acetyl-CoA starter unit with 3 malonyl-CoA units and 2 methylations. The alpha-pyrone is then combined with geranylgeranyl pyrophosphate (GGPP) formed by the GGPP synthase dpchD through the action of the prenyltransferase dpchC to yield a linear alpha-pyrone diterpenoid. Subsequent steps in the diterpenoid pyrone biosynthetic pathway involve the decalin core formation, which is initiated by the epoxidation of the C10-C11 olefin by the FAD-dependent oxidoreductase dpchE, and is followed by a cyclization cascade catalyzed by the terpene cyclase dpchB. The short chain dehydrogenase/reductase dpchG then oxidizes the 8S hydroxy group to a ketone and the short chain dehydrogenase/reductase dpchH reduces the ketone to the 8R hydroxy group to yield higginsianin B. Finally, the FAD-dependent oxidoreductase dpchF converts higginsianin B into higginsianin A. In Colletotrichum higginsianum (strain IMI 349063) (Crucifer anthracnose fungus), this protein is Short chain dehydrogenase/reductase dpchH.